Here is a 50-residue protein sequence, read N- to C-terminus: Protein PsbN (50 aa).

The helical transmembrane segment at 14–34 (VAVTILAVLLALTGFGLWTAF) threads the bilayer.

It belongs to the PsbN family.

It localises to the cellular thylakoid membrane. Functionally, may play a role in photosystem I and II biogenesis. The sequence is that of Protein PsbN from Prochlorococcus marinus subsp. pastoris (strain CCMP1986 / NIES-2087 / MED4).